The following is a 500-amino-acid chain: Farnesylcysteine lyase (500 aa).

Residues 1-24 (MKDFPIAISLLFALLSPVLLPCSG) form the signal peptide. Residues Asn-56, Asn-113, Asn-211, and Asn-281 are each glycosylated (N-linked (GlcNAc...) asparagine).

It belongs to the prenylcysteine oxidase family. Requires FAD as cofactor. As to expression, expressed in seedilings, flowers, stems, leaves and roots.

Its subcellular location is the lysosome. The enzyme catalyses S-(2E,6E)-farnesyl-L-cysteine + O2 + H2O = (2E,6E)-farnesal + L-cysteine + H2O2. In terms of biological role, involved in the degradation of prenylcysteine. Cleaves specifically the thioether bond of S-farnesyl-L-cysteine and has no activity with S-geranylgeranyl-L-cysteine. Also recognizes N-acetyl-farnesylcysteine and may have a role in deprenylation of farnesylated proteins. The polypeptide is Farnesylcysteine lyase (Arabidopsis thaliana (Mouse-ear cress)).